We begin with the raw amino-acid sequence, 135 residues long: Holo-[acyl-carrier-protein] synthase (135 aa).

Residues Asp7 and Glu57 each contribute to the Mg(2+) site.

This sequence belongs to the P-Pant transferase superfamily. AcpS family. Requires Mg(2+) as cofactor.

It is found in the cytoplasm. The enzyme catalyses apo-[ACP] + CoA = holo-[ACP] + adenosine 3',5'-bisphosphate + H(+). Transfers the 4'-phosphopantetheine moiety from coenzyme A to a Ser of acyl-carrier-protein. This chain is Holo-[acyl-carrier-protein] synthase, found in Corynebacterium glutamicum (strain ATCC 13032 / DSM 20300 / JCM 1318 / BCRC 11384 / CCUG 27702 / LMG 3730 / NBRC 12168 / NCIMB 10025 / NRRL B-2784 / 534).